A 122-amino-acid chain; its full sequence is Large ribosomal subunit protein uL14 (122 aa).

The protein belongs to the universal ribosomal protein uL14 family. In terms of assembly, part of the 50S ribosomal subunit. Forms a cluster with proteins L3 and L19. In the 70S ribosome, L14 and L19 interact and together make contacts with the 16S rRNA in bridges B5 and B8.

Binds to 23S rRNA. Forms part of two intersubunit bridges in the 70S ribosome. This chain is Large ribosomal subunit protein uL14, found in Chelativorans sp. (strain BNC1).